A 765-amino-acid polypeptide reads, in one-letter code: LPS-assembly protein LptD (765 aa).

Positions 1 to 18 are cleaved as a signal peptide; sequence MQIRYFLALSLLPQLVLA.

This sequence belongs to the LptD family. In terms of assembly, component of the lipopolysaccharide transport and assembly complex. Interacts with LptE and LptA.

The protein resides in the cell outer membrane. Together with LptE, is involved in the assembly of lipopolysaccharide (LPS) at the surface of the outer membrane. This Shewanella sp. (strain MR-4) protein is LPS-assembly protein LptD.